The primary structure comprises 146 residues: Lysozyme C (146 aa).

A signal peptide spans 1-16 (SGKYISWEDSCSYLQL). Residues 17–146 (QKYERCELAK…LSQWTQGCKL (130 aa)) form the C-type lysozyme domain. 4 cysteine pairs are disulfide-bonded: Cys22/Cys144, Cys46/Cys132, Cys81/Cys97, and Cys93/Cys111. Residues Glu51 and Asp69 contribute to the active site.

Belongs to the glycosyl hydrolase 22 family. As to expression, expressed by the skin glands.

The protein localises to the secreted. It catalyses the reaction Hydrolysis of (1-&gt;4)-beta-linkages between N-acetylmuramic acid and N-acetyl-D-glucosamine residues in a peptidoglycan and between N-acetyl-D-glucosamine residues in chitodextrins.. Lysozymes have primarily a bacteriolytic function; those in tissues and body fluids are associated with the monocyte-macrophage system and enhance the activity of immunoagents. Has antibacterial activity against the Gram-positive bacterium S.aureus and against the Gram-negative bacterium E.coli with a MIC of 1 uM and 8 uM respectively. No antifungal activity against C.albicans. The sequence is that of Lysozyme C from Bufo gargarizans andrewsi (Andrew's toad).